Consider the following 430-residue polypeptide: Lipoyl synthase, mitochondrial (430 aa).

The N-terminal 37 residues, M1–Y37, are a transit peptide targeting the mitochondrion. Polar residues predominate over residues T39–P55. The tract at residues T39–K58 is disordered. Residues C141, C146, C152, C172, C176, C179, and S387 each coordinate [4Fe-4S] cluster. The 222-residue stretch at G155 to L376 folds into the Radical SAM core domain.

Belongs to the radical SAM superfamily. Lipoyl synthase family. [4Fe-4S] cluster serves as cofactor.

It is found in the mitochondrion. It carries out the reaction [[Fe-S] cluster scaffold protein carrying a second [4Fe-4S](2+) cluster] + N(6)-octanoyl-L-lysyl-[protein] + 2 oxidized [2Fe-2S]-[ferredoxin] + 2 S-adenosyl-L-methionine + 4 H(+) = [[Fe-S] cluster scaffold protein] + N(6)-[(R)-dihydrolipoyl]-L-lysyl-[protein] + 4 Fe(3+) + 2 hydrogen sulfide + 2 5'-deoxyadenosine + 2 L-methionine + 2 reduced [2Fe-2S]-[ferredoxin]. The protein operates within protein modification; protein lipoylation via endogenous pathway; protein N(6)-(lipoyl)lysine from octanoyl-[acyl-carrier-protein]: step 2/2. Catalyzes the radical-mediated insertion of two sulfur atoms into the C-6 and C-8 positions of the octanoyl moiety bound to the lipoyl domains of lipoate-dependent enzymes, thereby converting the octanoylated domains into lipoylated derivatives. In Ajellomyces capsulatus (strain G186AR / H82 / ATCC MYA-2454 / RMSCC 2432) (Darling's disease fungus), this protein is Lipoyl synthase, mitochondrial.